We begin with the raw amino-acid sequence, 304 residues long: ATP phosphoribosyltransferase (304 aa).

It belongs to the ATP phosphoribosyltransferase family. Long subfamily. It depends on Mg(2+) as a cofactor.

It is found in the cytoplasm. It catalyses the reaction 1-(5-phospho-beta-D-ribosyl)-ATP + diphosphate = 5-phospho-alpha-D-ribose 1-diphosphate + ATP. Its pathway is amino-acid biosynthesis; L-histidine biosynthesis; L-histidine from 5-phospho-alpha-D-ribose 1-diphosphate: step 1/9. Feedback inhibited by histidine. Functionally, catalyzes the condensation of ATP and 5-phosphoribose 1-diphosphate to form N'-(5'-phosphoribosyl)-ATP (PR-ATP). Has a crucial role in the pathway because the rate of histidine biosynthesis seems to be controlled primarily by regulation of HisG enzymatic activity. This Xylella fastidiosa (strain 9a5c) protein is ATP phosphoribosyltransferase.